The primary structure comprises 150 residues: 3-dehydroquinate dehydratase (150 aa).

Tyr-26 acts as the Proton acceptor in catalysis. Substrate-binding residues include Asn-77, His-83, and Asp-90. The Proton donor role is filled by His-103. Substrate contacts are provided by residues Leu-104–Ser-105 and Arg-114.

This sequence belongs to the type-II 3-dehydroquinase family. Homododecamer.

The catalysed reaction is 3-dehydroquinate = 3-dehydroshikimate + H2O. Its pathway is metabolic intermediate biosynthesis; chorismate biosynthesis; chorismate from D-erythrose 4-phosphate and phosphoenolpyruvate: step 3/7. Catalyzes a trans-dehydration via an enolate intermediate. This Mannheimia succiniciproducens (strain KCTC 0769BP / MBEL55E) protein is 3-dehydroquinate dehydratase.